The chain runs to 931 residues: Ribosome-releasing factor 2, mitochondrial (931 aa).

A tr-type G domain is found at 63-379 (EKTRNIGIIA…AVNNLLPGPS (317 aa)). GTP-binding positions include 72–79 (AHIDAGKT), 162–166 (DTPGH), and 216–219 (NKLD).

This sequence belongs to the TRAFAC class translation factor GTPase superfamily. Classic translation factor GTPase family. EF-G/EF-2 subfamily.

The protein localises to the mitochondrion. Functionally, mitochondrial GTPase that mediates the disassembly of ribosomes from messenger RNA at the termination of mitochondrial protein biosynthesis. Not involved in the GTP-dependent ribosomal translocation step during translation elongation. The polypeptide is Ribosome-releasing factor 2, mitochondrial (mef2) (Talaromyces stipitatus (strain ATCC 10500 / CBS 375.48 / QM 6759 / NRRL 1006) (Penicillium stipitatum)).